A 418-amino-acid polypeptide reads, in one-letter code: Ceramide synthase LAC1 (418 aa).

Residues 1–14 (MSTIKPSPSNNNLK) show a composition bias toward polar residues. Residues 1–25 (MSTIKPSPSNNNLKVRSRPRRKSSI) are disordered. At serine 2 the chain carries N-acetylserine. Residues 2–81 (STIKPSPSNN…WFSFREISYR (80 aa)) are Cytoplasmic-facing. Basic residues predominate over residues 15–24 (VRSRPRRKSS). A phosphoserine mark is found at serine 23 and serine 24. Residues 82-102 (HAWIAPLMILIAVYSAYFTSG) form a helical membrane-spanning segment. Residue asparagine 103 is glycosylated (N-linked (GlcNAc...) asparagine). Residues 103-130 (NTTKTNVLHRFVAVSYQIGDTNAYGKGI) lie on the Lumenal side of the membrane. Residues 131–155 (NDLCFVFYYMIFFTFLREFLMDVVI) form a helical membrane-spanning segment. At 156–172 (RPFAIRLHVTSKHRIKR) the chain is on the cytoplasmic side. The region spanning 168–385 (HRIKRIMEQM…FRVLYRILWR (218 aa)) is the TLC domain. Positions 169, 172, and 182 each coordinate fumonisin B1. The chain crosses the membrane as a helical span at residues 173 to 194 (IMEQMYAIFYTGVSGPFGIYCM). The Lumenal portion of the chain corresponds to 195-217 (YHSDLWFFNTKAMYRTYPDFTNP). A helical membrane pass occupies residues 218–240 (FLFKVFYLGQAAFWAQQACILVL). The hexacosanoate site is built by tyrosine 224 and tryptophan 231. Tryptophan 231 provides a ligand contact to fumonisin B1. Residue tryptophan 231 coordinates hexacosanoyl-CoA. The Cytoplasmic portion of the chain corresponds to 241 to 249 (QLEKPRKDH). Residues 250–268 (NELTFHHIVTLLLIWSSYV) form a helical membrane-spanning segment. Histidine 255 is a binding site for fumonisin B1. Hexacosanoate contacts are provided by histidine 255, threonine 259, leucine 262, isoleucine 263, serine 265, serine 266, phenylalanine 269, phenylalanine 271, methionine 274, glycine 275, isoleucine 278, tyrosine 279, methionine 282, aspartate 283, and aspartate 286. The hexacosanoyl-CoA site is built by histidine 255, threonine 259, and leucine 262. Residues serine 265 and serine 266 each coordinate hexacosanoyl-CoA. Residues 269 to 273 (FHFTK) lie on the Lumenal side of the membrane. Hexacosanoyl-CoA-binding residues include phenylalanine 271, methionine 274, glycine 275, isoleucine 278, tyrosine 279, and methionine 282. Residues 274-295 (MGLPIYITMDVSDFLLSFSKTL) traverse the membrane as a helical segment. 9 residues coordinate fumonisin B1: aspartate 286, leucine 289, lysine 293, asparagine 296, tyrosine 297, alanine 303, phenylalanine 304, phenylalanine 307, and tryptophan 314. Hexacosanoyl-CoA is bound by residues aspartate 286, leucine 289, lysine 293, and asparagine 296. Residues 296 to 305 (NYLDSGLAFF) lie on the Cytoplasmic side of the membrane. The helical transmembrane segment at 306–334 (SFAIFVVAWIYLRHYINLKILWSVLTQFR) threads the bilayer. Hexacosanoyl-CoA is bound at residue phenylalanine 307. Positions 318, 343, 348, 352, 353, 356, 357, 360, 361, and 371 each coordinate hexacosanoate. Arginine 318 serves as a coordination point for hexacosanoyl-CoA. Residues 335–353 (TEGNYVLNFATQQYKCWIS) are Lumenal-facing. Residues tyrosine 348, isoleucine 352, serine 353, isoleucine 356, valine 357, and leucine 360 each coordinate hexacosanoyl-CoA. The chain crosses the membrane as a helical span at residues 354–382 (LPIVFVLIGALQLVNLYWLFLIFRVLYRI). Residues tryptophan 371, isoleucine 375, valine 378, isoleucine 382, and arginine 385 each contribute to the fumonisin B1 site. Position 371 (tryptophan 371) interacts with hexacosanoyl-CoA. Residues 383-418 (LWRGILKDDRSDSESDEESDESSTTPTDSTPTKKDI) lie on the Cytoplasmic side of the membrane. The disordered stretch occupies residues 390–418 (DDRSDSESDEESDESSTTPTDSTPTKKDI).

This sequence belongs to the sphingosine N-acyltransferase family. As to quaternary structure, component of the ceramide synthase complex composed of at least LAC1, LAG1 and LIP1. Forms a heterotetrameric complex, where one unit of the LIP1 homodimer interacts with LAC1 and the other with either LAC1 or LAG1. Post-translationally, phosphorylated; phosphorylation is induced upon disruption of sphingolipid synthesis. Phosphorylation is inhibited by exogenous addition of phytosphingosine.

The protein localises to the endoplasmic reticulum membrane. The catalysed reaction is a very long-chain fatty acyl-CoA + a sphingoid base = an N-(very-long-chain fatty acyl)-sphingoid base + CoA + H(+). It catalyses the reaction hexacosanoyl-CoA + sphinganine = N-hexacosanoylsphinganine + CoA + H(+). It carries out the reaction eicosanoyl-CoA + sphinganine = N-eicosanoylsphinganine + CoA + H(+). The enzyme catalyses a fatty acyl-CoA + sphinganine = an N-acylsphinganine + CoA + H(+). The catalysed reaction is (4R)-hydroxysphinganine + a fatty acyl-CoA = an N-acyl-(4R)-4-hydroxysphinganine + CoA + H(+). It participates in lipid metabolism; sphingolipid metabolism. As part of the ceramide synthase complex, inhibited by the sphinganine analog mycotoxin, fumonisin B1 (FB1). Activated by ACB1, as part of the ceramide synthase complex. Its function is as follows. Component of the ceramide synthase complex that catalyzes the transfer of the acyl chain from acyl-CoA to a sphingoid base, with high selectivity toward hexacosanoyl-CoA (C26:0-CoA). N-acylates sphinganine and phytosphingosine bases to form dihydroceramides and phytoceramides, respectively. Redundant with LAG1. Facilitates ER-to-Golgi transport of GPI-anchored proteins. Has a lower affinity for phytosphingosine (PHS) than dihydrosphingosine (DHS); PHS is required for the synthesis of phytoceramides and the formation of nuclear envelopes. Along with LAG1, plays a role in pheromone-induced MAP kinase-activation of mating and formation of diploid cells. May also play a role, together with LAG1, in the polarized membrane distribution of phosphatidylinositol 4,5 biphosphate required for STE5 localization to the plasma membrane. This is Ceramide synthase LAC1 (LAC1) from Saccharomyces cerevisiae (strain ATCC 204508 / S288c) (Baker's yeast).